An 864-amino-acid chain; its full sequence is Microtubule-associated protein TORTIFOLIA1 (864 aa).

The interval 1–26 (MSTPTTSGSAAKPTRPARSSSLATRS) is disordered. Polar residues predominate over residues 17–26 (ARSSSLATRS). 5 HEAT repeats span residues 76–113 (ETLP…LHCD), 117–154 (AHLT…IYLK), 167–204 (LAVG…SAAS), 208–245 (TSFQ…VGAI), and 248–285 (QSLE…HSSG). A disordered region spans residues 329 to 353 (DGASDDSKLSASEQLGSEKNGEKRS). The residue at position 414 (Ser-414) is a Phosphoserine. Positions 426–504 (NDEEESGLDD…QSEGSFTSNR (79 aa)) are disordered. A compositionally biased stretch (polar residues) spans 439–448 (MGSSNRLKNT). Positions 449–459 (QADDKQVKGRF) are enriched in basic and acidic residues. Residues 489–504 (VSNTDNQSEGSFTSNR) are compositionally biased toward polar residues. Positions 508–561 (SAIQRQLLQLERQQTNLMNMLQEFIGGSHDSMVTLEGRVRGLERIVEDMARDLS) form a coiled coil. The disordered stretch occupies residues 615 to 670 (DDWFIPPHAASRNGQAGPRRSPRSEQYENEHMGNGRRGWDNKASGTIRFGEGPSAR). Basic and acidic residues predominate over residues 636–654 (PRSEQYENEHMGNGRRGWD).

Interacts with WAV3. Expressed in roots, hypocotyls, stems, flowers, siliques, inflorescences, petioles, cotyledons, and leaves. Particularly present in root tips and shoot meristems.

The protein resides in the cytoplasm. It is found in the cytoskeleton. In terms of biological role, plant-specific microtubule-associated protein (MAP) that regulates the orientation of cortical microtubules and the direction of organ growth. Determines microtubule organization by modulating microtubule severing. The sequence is that of Microtubule-associated protein TORTIFOLIA1 from Arabidopsis thaliana (Mouse-ear cress).